Consider the following 142-residue polypeptide: Peptidyl-prolyl cis-trans isomerase FKBP2 (142 aa).

The N-terminal stretch at 1–21 is a signal peptide; it reads MRLSWFRVLTVLSICLSAVAT. Residues 49–137 form the PPIase FKBP-type domain; it reads GDVLHMHYTG…VFEVELLKIE (89 aa). The Prevents secretion from ER motif lies at 139–142; it reads RTEL.

It belongs to the FKBP-type PPIase family. FKBP2 subfamily. Interacts with ARFGEF1/BIG1 and the C-terminal of EPB41L2. T-cells and thymus.

It is found in the endoplasmic reticulum membrane. It catalyses the reaction [protein]-peptidylproline (omega=180) = [protein]-peptidylproline (omega=0). With respect to regulation, inhibited by both FK506 and rapamycin. Its function is as follows. PPIases accelerate the folding of proteins. It catalyzes the cis-trans isomerization of proline imidic peptide bonds in oligopeptides. The polypeptide is Peptidyl-prolyl cis-trans isomerase FKBP2 (FKBP2) (Homo sapiens (Human)).